Here is a 239-residue protein sequence, read N- to C-terminus: Octanoyl-[acyl-carrier-protein]:protein N-octanoyltransferase LIPT2, mitochondrial (239 aa).

Residues 1–18 (MSVPVLRVRRLGLVGYAE) constitute a mitochondrion transit peptide. One can recognise a BPL/LPL catalytic domain in the interval 37 to 217 (GSPGGALLLC…AFEEEFQCQL (181 aa)). Substrate-binding positions include 81–88 (RGGLITFH), 147–149 (AIG), and 160–162 (GLA). Cysteine 178 serves as the catalytic Acyl-thioester intermediate. The disordered stretch occupies residues 220–239 (EQNPEQNPVQNRPDRDAGPL).

Belongs to the LipB family.

It is found in the mitochondrion. It catalyses the reaction octanoyl-[ACP] + L-lysyl-[protein] = N(6)-octanoyl-L-lysyl-[protein] + holo-[ACP] + H(+). It participates in protein modification; protein lipoylation via endogenous pathway; protein N(6)-(lipoyl)lysine from octanoyl-[acyl-carrier-protein]: step 1/2. Catalyzes the transfer of endogenously produced octanoic acid from octanoyl-acyl-carrier-protein (octanoyl-ACP) onto the lipoyl domains of lipoate-dependent enzymes such as the protein H of the glycine cleavage system (GCSH). Lipoyl-ACP can also act as a substrate although octanoyl-ACP is likely to be the physiological substrate. The protein is Octanoyl-[acyl-carrier-protein]:protein N-octanoyltransferase LIPT2, mitochondrial (lipt2) of Xenopus tropicalis (Western clawed frog).